The chain runs to 358 residues: Peptide chain release factor 1 (358 aa).

Q233 carries the N5-methylglutamine modification.

This sequence belongs to the prokaryotic/mitochondrial release factor family. Methylated by PrmC. Methylation increases the termination efficiency of RF1.

The protein resides in the cytoplasm. Functionally, peptide chain release factor 1 directs the termination of translation in response to the peptide chain termination codons UAG and UAA. In Clostridium botulinum (strain Loch Maree / Type A3), this protein is Peptide chain release factor 1.